The sequence spans 510 residues: Probable mannosyl-oligosaccharide alpha-1,2-mannosidase 1B (510 aa).

The first 21 residues, 1–21, serve as a signal peptide directing secretion; that stretch reads MHFSSLSLPLTALSLVTPSLA. N-linked (GlcNAc...) asparagine glycans are attached at residues asparagine 35, asparagine 95, asparagine 182, and asparagine 249. A disulfide bridge connects residues cysteine 332 and cysteine 361. The N-linked (GlcNAc...) asparagine glycan is linked to asparagine 366. Glutamate 375 acts as the Proton donor in catalysis. Threonine 501 is a Ca(2+) binding site.

Belongs to the glycosyl hydrolase 47 family. As to quaternary structure, monomer. The cofactor is Ca(2+). Requires Mg(2+) as cofactor.

It is found in the cytoplasmic vesicle lumen. It catalyses the reaction N(4)-(alpha-D-Man-(1-&gt;2)-alpha-D-Man-(1-&gt;2)-alpha-D-Man-(1-&gt;3)-[alpha-D-Man-(1-&gt;2)-alpha-D-Man-(1-&gt;3)-[alpha-D-Man-(1-&gt;2)-alpha-D-Man-(1-&gt;6)]-alpha-D-Man-(1-&gt;6)]-beta-D-Man-(1-&gt;4)-beta-D-GlcNAc-(1-&gt;4)-beta-D-GlcNAc)-L-asparaginyl-[protein] (N-glucan mannose isomer 9A1,2,3B1,2,3) + 4 H2O = N(4)-(alpha-D-Man-(1-&gt;3)-[alpha-D-Man-(1-&gt;3)-[alpha-D-Man-(1-&gt;6)]-alpha-D-Man-(1-&gt;6)]-beta-D-Man-(1-&gt;4)-beta-D-GlcNAc-(1-&gt;4)-beta-D-GlcNAc)-L-asparaginyl-[protein] (N-glucan mannose isomer 5A1,2) + 4 beta-D-mannose. The catalysed reaction is N(4)-(alpha-D-Man-(1-&gt;2)-alpha-D-Man-(1-&gt;2)-alpha-D-Man-(1-&gt;3)-[alpha-D-Man-(1-&gt;3)-[alpha-D-Man-(1-&gt;2)-alpha-D-Man-(1-&gt;6)]-alpha-D-Man-(1-&gt;6)]-beta-D-Man-(1-&gt;4)-beta-D-GlcNAc-(1-&gt;4)-beta-D-GlcNAc)-L-asparaginyl-[protein] (N-glucan mannose isomer 8A1,2,3B1,3) + 3 H2O = N(4)-(alpha-D-Man-(1-&gt;3)-[alpha-D-Man-(1-&gt;3)-[alpha-D-Man-(1-&gt;6)]-alpha-D-Man-(1-&gt;6)]-beta-D-Man-(1-&gt;4)-beta-D-GlcNAc-(1-&gt;4)-beta-D-GlcNAc)-L-asparaginyl-[protein] (N-glucan mannose isomer 5A1,2) + 3 beta-D-mannose. It participates in protein modification; protein glycosylation. Functionally, involved in the maturation of Asn-linked oligosaccharides. Progressively trims alpha-1,2-linked mannose residues from Man(9)GlcNAc(2) to produce Man(5)GlcNAc(2). In Aspergillus flavus (strain ATCC 200026 / FGSC A1120 / IAM 13836 / NRRL 3357 / JCM 12722 / SRRC 167), this protein is Probable mannosyl-oligosaccharide alpha-1,2-mannosidase 1B (mns1B).